A 173-amino-acid chain; its full sequence is Crossover junction endodeoxyribonuclease RuvC (173 aa).

Active-site residues include D8, E67, and D139. The Mg(2+) site is built by D8, E67, and D139.

It belongs to the RuvC family. As to quaternary structure, homodimer which binds Holliday junction (HJ) DNA. The HJ becomes 2-fold symmetrical on binding to RuvC with unstacked arms; it has a different conformation from HJ DNA in complex with RuvA. In the full resolvosome a probable DNA-RuvA(4)-RuvB(12)-RuvC(2) complex forms which resolves the HJ. Requires Mg(2+) as cofactor.

The protein resides in the cytoplasm. It carries out the reaction Endonucleolytic cleavage at a junction such as a reciprocal single-stranded crossover between two homologous DNA duplexes (Holliday junction).. The RuvA-RuvB-RuvC complex processes Holliday junction (HJ) DNA during genetic recombination and DNA repair. Endonuclease that resolves HJ intermediates. Cleaves cruciform DNA by making single-stranded nicks across the HJ at symmetrical positions within the homologous arms, yielding a 5'-phosphate and a 3'-hydroxyl group; requires a central core of homology in the junction. The consensus cleavage sequence is 5'-(A/T)TT(C/G)-3'. Cleavage occurs on the 3'-side of the TT dinucleotide at the point of strand exchange. HJ branch migration catalyzed by RuvA-RuvB allows RuvC to scan DNA until it finds its consensus sequence, where it cleaves and resolves the cruciform DNA. This is Crossover junction endodeoxyribonuclease RuvC from Erwinia tasmaniensis (strain DSM 17950 / CFBP 7177 / CIP 109463 / NCPPB 4357 / Et1/99).